A 462-amino-acid polypeptide reads, in one-letter code: Argininosuccinate lyase (462 aa).

It belongs to the lyase 1 family. Argininosuccinate lyase subfamily.

The protein resides in the cytoplasm. The enzyme catalyses 2-(N(omega)-L-arginino)succinate = fumarate + L-arginine. The protein operates within amino-acid biosynthesis; L-arginine biosynthesis; L-arginine from L-ornithine and carbamoyl phosphate: step 3/3. This chain is Argininosuccinate lyase, found in Nitratiruptor sp. (strain SB155-2).